We begin with the raw amino-acid sequence, 782 residues long: LPS-assembly protein LptD (782 aa).

The N-terminal stretch at 1-23 is a signal peptide; it reads MNKKHTLISLAILTALYSQQSLA.

The protein belongs to the LptD family. In terms of assembly, component of the lipopolysaccharide transport and assembly complex. Interacts with LptE and LptA.

Its subcellular location is the cell outer membrane. Its function is as follows. Together with LptE, is involved in the assembly of lipopolysaccharide (LPS) at the surface of the outer membrane. The sequence is that of LPS-assembly protein LptD from Haemophilus influenzae (strain 86-028NP).